The sequence spans 320 residues: Mitochondrial thiamine pyrophosphate carrier (320 aa).

Solcar repeat units lie at residues 13 to 106, 116 to 202, and 214 to 309; these read NTKL…LTEL, REFS…LKHL, and NENL…FCNV. Residues 19 to 39 form a helical membrane-spanning segment; it reads AVAGSVSGLVTRALISPFDVI. The residue at position 51 (serine 51) is a Phosphoserine. Helical transmembrane passes span 87–107, 122–142, 173–193, and 220–240; these read ILSIGYGAVQFLSFEMLTELV, FVCGGLAACTATLTVHPVDVL, VFYKGLAPTLIAIFPYAGLQF, and LLCGSGAGVISKTLTYPLDLF. A Substrate recognition motif is present at residues 241-246; sequence KKRLQV. A helical transmembrane segment spans residues 293 to 313; the sequence is ALSTGFMFFWYEFFCNVFHCM.

The protein belongs to the mitochondrial carrier (TC 2.A.29) family.

The protein localises to the mitochondrion membrane. The catalysed reaction is thiamine phosphate(out) + thiamine diphosphate(in) = thiamine phosphate(in) + thiamine diphosphate(out). In terms of biological role, mitochondrial transporter mediating uptake of thiamine diphosphate into mitochondria. It is not clear if the antiporter activity is affected by the membrane potential or by the proton electrochemical gradient. This chain is Mitochondrial thiamine pyrophosphate carrier (SLC25A19), found in Macaca fascicularis (Crab-eating macaque).